Reading from the N-terminus, the 875-residue chain is Translation initiation factor IF-2 (875 aa).

Disordered regions lie at residues 1–20 (MSDSDKKPTLGRRPLGLKTA), 47–102 (LMGR…LREA), and 126–246 (EEER…DRRG). Residues 54-66 (AAPTAAPAAAATP) are compositionally biased toward low complexity. The span at 67-85 (APTPVAPPPPPPPPPPPPS) shows a compositional bias: pro residues. Basic and acidic residues-rich tracts occupy residues 88-102 (RETRQEMQVRLLREA) and 126-140 (EEERRRAEEKARAEA). Low complexity-rich tracts occupy residues 141 to 195 (EAAA…PAAP) and 202 to 221 (PAAPAVPAPRRFTPVAPAAP). Residues 223 to 246 (KRPELAAKKPAHPQRDRKTEDRRG) are compositionally biased toward basic and acidic residues. The tr-type G domain maps to 374–544 (ARPPVVTIMG…LLQAELLELK (171 aa)). The G1 stretch occupies residues 383–390 (GHVDHGKT). 383–390 (GHVDHGKT) contacts GTP. Residues 408 to 412 (GITQH) form a G2 region. Residues 430–433 (DTPG) are G3. GTP contacts are provided by residues 430–434 (DTPGH) and 484–487 (TKAD). The interval 484–487 (TKAD) is G4. Residues 520–522 (SAK) form a G5 region.

Belongs to the TRAFAC class translation factor GTPase superfamily. Classic translation factor GTPase family. IF-2 subfamily.

It localises to the cytoplasm. In terms of biological role, one of the essential components for the initiation of protein synthesis. Protects formylmethionyl-tRNA from spontaneous hydrolysis and promotes its binding to the 30S ribosomal subunits. Also involved in the hydrolysis of GTP during the formation of the 70S ribosomal complex. This Novosphingobium aromaticivorans (strain ATCC 700278 / DSM 12444 / CCUG 56034 / CIP 105152 / NBRC 16084 / F199) protein is Translation initiation factor IF-2.